Reading from the N-terminus, the 335-residue chain is Probable geranylgeranyl transferase type-2 subunit beta (335 aa).

PFTB repeat units lie at residues 74–115 (TEEI…IIFN), 122–163 (ADTI…HLLG), 170–211 (IDSA…AIAG), 218–259 (RDRT…AILG), and 266–312 (SDAM…DDTL). Residues 196–198 (HSG) and 238–250 (RPEKLPDVCYSWW) contribute to the geranylgeranyl diphosphate site. 3 residues coordinate Zn(2+): Asp244, Cys246, and His296.

The protein belongs to the protein prenyltransferase subunit beta family. Heterodimer of an alpha and a beta subunit. Zn(2+) serves as cofactor.

It carries out the reaction geranylgeranyl diphosphate + L-cysteinyl-[protein] = S-geranylgeranyl-L-cysteinyl-[protein] + diphosphate. Functionally, catalyzes the transfer of a geranyl-geranyl moiety from geranyl-geranyl pyrophosphate to both cysteines in Rab proteins with an -XXCC, -XCXC and -CCXX C-terminal. The sequence is that of Probable geranylgeranyl transferase type-2 subunit beta (ggtb-1) from Caenorhabditis elegans.